Consider the following 384-residue polypeptide: Cytochrome b (384 aa).

Transmembrane regions (helical) follow at residues 32 to 52 (FGSL…FLAM), 76 to 98 (WLLR…LHMA), 113 to 133 (LWNM…MGYC), and 179 to 199 (FFSL…LHLL). 2 residues coordinate heme b: histidine 82 and histidine 96. Heme b is bound by residues histidine 183 and histidine 197. Histidine 202 lines the a ubiquinone pocket. The next 4 helical transmembrane spans lie at 225 to 245 (FLFK…FLIS), 289 to 309 (MMGV…PFVD), 321 to 341 (LSKI…LIGA), and 348 to 368 (YIII…ILLP).

Belongs to the cytochrome b family. Fungal cytochrome b-c1 complex contains 10 subunits; 3 respiratory subunits, 2 core proteins and 5 low-molecular weight proteins. Cytochrome b-c1 complex is a homodimer. Requires heme b as cofactor.

The protein localises to the mitochondrion inner membrane. Its function is as follows. Component of the ubiquinol-cytochrome c reductase complex (complex III or cytochrome b-c1 complex) that is part of the mitochondrial respiratory chain. The b-c1 complex mediates electron transfer from ubiquinol to cytochrome c. Contributes to the generation of a proton gradient across the mitochondrial membrane that is then used for ATP synthesis. This is Cytochrome b (COB) from Starmerella bacillaris (Yeast).